A 249-amino-acid polypeptide reads, in one-letter code: Low affinity immunoglobulin gamma Fc region receptor III-A (249 aa).

Residues 1 to 20 (MWYLLLPTALLLTVSSGVGA) form the signal peptide. Topologically, residues 21 to 203 (GLQKAVVNLD…SPSSFLPWHQ (183 aa)) are extracellular. Ig-like C2-type domains follow at residues 31–103 (PEWV…QLDV) and 117–188 (FQEG…LQIS). Disulfide bonds link Cys-46–Cys-88 and Cys-127–Cys-171. Residues Asn-55 and Asn-62 are each glycosylated (N-linked (GlcNAc...) asparagine). N-linked (GlcNAc...) asparagine glycosylation occurs at Asn-179. The helical transmembrane segment at 204-224 (ITFCLLIGLLFAIDTVLYFSV) threads the bilayer. Residues 225-249 (QRSLQSSVAVYEEPKLHWSKEPQDK) lie on the Cytoplasmic side of the membrane. Tyr-235 is subject to Phosphotyrosine.

Forms a heterooligomeric complex with ITAM-containing signaling subunits FCER1G. Interacts (via transmembrane domain) with signaling subunits; this interaction is a prerequisite for receptor complex expression on the cell surface and intracellular signal transduction. Binds the Fc region of antigen-complexed IgG. N-glycosylated. In terms of processing, phosphorylated following receptor ligation.

It is found in the cell membrane. Receptor for the invariable Fc fragment of immunoglobulin gamma (IgG). Binds with intermediate affinity to both IgG2a and IgG2b. Can bind to IgG2a and IgG2b monomers. Does not display binding to IgG1 or IgG3. Recognizes neutralizing virus-specific IgGs displayed on the cell surface of infected cells and triggers antibody-dependent cellular cytotoxicity (ADCC). Confers protection to lethal influenza virus infection. On splenic dendritic cells, uptakes antigen immune complexes and efficiently divert them into MHC class I and II antigen presentation pathways to provide for superior priming of CD4-positive and CD8-positive T cell immune responses. Mediates neutrophil activation by IgG complexes redundantly with FCGR2A. Plays a role in promoting bone resorption by enhancing osteoclast differentiation following binding to IgG2a. Also acts as a receptor for the Fc region of immunoglobulin epsilon (IgE). Binds with low affinity to both the a and b allotypes of IgE. Has also been shown to bind to IgE allotype a only but not to allotype b. Binds aggregated IgE but not the monomeric form and bound monomeric IgG is readily displaced by IgE complexes. Binding to IgE promotes macrophage-mediated phagocytosis, antigen presentation to T cells, production of pro-inflammatory cytokines and the late phase of cutaneous allergic reactions. Mediates enhanced ADCC in response to afucosylated IgGs. This Rattus norvegicus (Rat) protein is Low affinity immunoglobulin gamma Fc region receptor III-A.